The chain runs to 250 residues: Exosome complex component Rrp41 (250 aa).

It belongs to the RNase PH family. Rrp41 subfamily. In terms of assembly, component of the archaeal exosome complex. Forms a hexameric ring-like arrangement composed of 3 Rrp41-Rrp42 heterodimers. The hexameric ring associates with a trimer of Rrp4 and/or Csl4 subunits.

Its subcellular location is the cytoplasm. Functionally, catalytic component of the exosome, which is a complex involved in RNA degradation. Has 3'-&gt;5' exoribonuclease activity. Can also synthesize heteromeric RNA-tails. This is Exosome complex component Rrp41 from Pyrococcus furiosus (strain ATCC 43587 / DSM 3638 / JCM 8422 / Vc1).